A 454-amino-acid polypeptide reads, in one-letter code: DNA primase small subunit (454 aa).

Catalysis depends on residues Glu-66, Asp-131, and Asp-133. Residues Asp-131 and Asp-133 each contribute to the Mg(2+) site. Positions 131 and 133 each coordinate Mn(2+). 131–133 (DID) is a binding site for a ribonucleoside 5'-triphosphate. Zn(2+) is bound by residues Cys-143, Cys-144, Cys-150, and Cys-153. The short motif at 143-153 (CCSKTNICEKC) is the Zinc knuckle motif element. 182–188 (SGRRGIH) is an a ribonucleoside 5'-triphosphate binding site. Position 333 (Asp-333) interacts with Mg(2+). Asp-333 serves as a coordination point for Mn(2+). 342 to 345 (HLLK) serves as a coordination point for a ribonucleoside 5'-triphosphate. Residues 385-420 (DKNSQNDNGHGPTMETNTTENQKDNARGQSNKGHGF) are disordered. Polar residues-rich tracts occupy residues 389-404 (QNDN…NTTE) and 411-420 (RGQSNKGHGF).

This sequence belongs to the eukaryotic-type primase small subunit family. Heterodimer of a catalytic subunit spp1/pri1 and a regulatory subunit spp2/pri2, also known as the DNA primase complex. Component of the alpha DNA polymerase complex (also known as the alpha DNA polymerase-primase complex) consisting of four subunits: the catalytic subunit pol1, the accessory subunit spb70/pol12, and the primase complex subunits spp1/pri1 and spp2/pri2 respectively. Requires Mg(2+) as cofactor. The cofactor is Mn(2+).

The protein localises to the nucleus. It carries out the reaction ssDNA + n NTP = ssDNA/pppN(pN)n-1 hybrid + (n-1) diphosphate.. Functionally, catalytic subunit of the DNA primase complex and component of the DNA polymerase alpha complex (also known as the alpha DNA polymerase-primase complex - primosome/replisome) which play an essential role in the initiation of DNA synthesis. During the S phase of the cell cycle, the DNA polymerase alpha complex (composed of a catalytic subunit pol1, an accessory subunit spb70/pol12 and two primase subunits, the catalytic subunit spp1/pri1 and the regulatory subunit spp2/pri2) is recruited to DNA at the replicative forks. The primase subunit of the polymerase alpha complex initiates DNA synthesis by oligomerising short RNA primers on both leading and lagging strands. The chain is DNA primase small subunit from Schizosaccharomyces pombe (strain 972 / ATCC 24843) (Fission yeast).